Consider the following 386-residue polypeptide: Succinate--CoA ligase [ADP-forming] subunit beta (386 aa).

The 236-residue stretch at 9–244 (KELLRDYGVP…LNEEDEKEIE (236 aa)) folds into the ATP-grasp domain. ATP contacts are provided by residues Lys-46, 53-55 (GRG), Glu-99, Cys-102, and Glu-107. Mg(2+)-binding residues include Asn-199 and Asp-213. Substrate contacts are provided by residues Asn-264 and 321–323 (GIM).

Belongs to the succinate/malate CoA ligase beta subunit family. In terms of assembly, heterotetramer of two alpha and two beta subunits. Requires Mg(2+) as cofactor.

The catalysed reaction is succinate + ATP + CoA = succinyl-CoA + ADP + phosphate. It catalyses the reaction GTP + succinate + CoA = succinyl-CoA + GDP + phosphate. Its pathway is carbohydrate metabolism; tricarboxylic acid cycle; succinate from succinyl-CoA (ligase route): step 1/1. Succinyl-CoA synthetase functions in the citric acid cycle (TCA), coupling the hydrolysis of succinyl-CoA to the synthesis of either ATP or GTP and thus represents the only step of substrate-level phosphorylation in the TCA. The beta subunit provides nucleotide specificity of the enzyme and binds the substrate succinate, while the binding sites for coenzyme A and phosphate are found in the alpha subunit. This Alkaliphilus oremlandii (strain OhILAs) (Clostridium oremlandii (strain OhILAs)) protein is Succinate--CoA ligase [ADP-forming] subunit beta.